Consider the following 84-residue polypeptide: MAELSLAELREIMRQSLGEDEVPDLADADTVTFEDLGLDSLAVLETVNHIERTYGVKLPEEELAEVRTPHSMLIFVNERLRAAA.

The Carrier domain maps to 3 to 80 (ELSLAELREI…SMLIFVNERL (78 aa)). S40 carries the O-(pantetheine 4'-phosphoryl)serine modification.

It functions in the pathway antibiotic biosynthesis; daunorubicin biosynthesis. It participates in antibiotic biosynthesis; carminomycin biosynthesis. The protein operates within antibiotic biosynthesis; rhodomycin biosynthesis. Its pathway is antibiotic biosynthesis; aclacinomycin biosynthesis. In terms of biological role, involved in the biosynthesis of aklanonate which is an important precursor common to the formation of the clinically significant anthracyclines such as carminomycin, daunorubicin (daunomycin), rhodomycin, aclacinomycin T (aklavin) and aclacinomycin A (aclarubicin). These compounds are aromatic polyketide antibiotics that exhibit high cytotoxicity and are widely applied in the chemotherapy of a variety of cancers. The chain is Anthracycline acyl carrier protein DpsG (dpsG) from Streptomyces peucetius.